A 362-amino-acid polypeptide reads, in one-letter code: ATP synthase F(1) complex catalytic subunit beta, mitochondrial (362 aa).

Lysine 14 is subject to N6-acetyllysine; alternate. An N6-succinyllysine; alternate modification is found at lysine 14. N6-acetyllysine is present on lysine 51. Valine 62, valine 63, glycine 64, lysine 65, threonine 66, and valine 67 together coordinate ADP. Valine 62 serves as a coordination point for ATP. Residues valine 62, valine 63, glycine 64, lysine 65, and threonine 66 each coordinate phosphate. ATP-binding residues include glycine 64, lysine 65, threonine 66, and valine 67. Threonine 66 provides a ligand contact to Mg(2+). Mg(2+) is bound at residue glutamate 91. Lysine 112 and lysine 117 each carry N6-acetyllysine; alternate. Lysine 112 and lysine 117 each carry N6-succinyllysine; alternate. A Phosphothreonine modification is found at threonine 165. Lysine 279 carries the N6-acetyllysine modification. Serine 286 bears the Phosphoserine mark. 2 positions are modified to N6-acetyllysine: lysine 333 and lysine 338.

It belongs to the ATPase alpha/beta chains family. Homotrimer. Component of the ATP synthase complex composed at least of ATP5F1A/subunit alpha, ATP5F1B/subunit beta, ATP5MC1/subunit c (homooctomer), MT-ATP6/subunit a, MT-ATP8/subunit 8, ATP5ME/subunit e, ATP5MF/subunit f, ATP5MG/subunit g, ATP5MK/subunit k, ATP5MJ/subunit j, ATP5F1C/subunit gamma, ATP5F1D/subunit delta, ATP5F1E/subunit epsilon, ATP5PF/subunit F6, ATP5PB/subunit b, ATP5PD/subunit d, ATP5PO/subunit OSCP. ATP synthase complex consists of a soluble F(1) head domain (subunits alpha(3) and beta(3)) - the catalytic core - and a membrane F(0) domain - the membrane proton channel (subunits c, a, 8, e, f, g, k and j). These two domains are linked by a central stalk (subunits gamma, delta, and epsilon) rotating inside the F1 region and a stationary peripheral stalk (subunits F6, b, d, and OSCP). Interacts with PPIF. Interacts with BCL2L1 isoform BCL-X(L); the interaction mediates the association of BCL2L1 isoform BCL-X(L) with the mitochondrial membrane F(1)F(0) ATP synthase and enhances neurons metabolic efficiency. Interacts with CLN5 and PPT1. Interacts with S100A1; this interaction increases F1-ATPase activity. Interacts with MTLN. Interacts with TTC5/STRAP; the interaction results in decreased mitochondrial ATP production.

It is found in the mitochondrion inner membrane. It carries out the reaction ATP + H2O + 4 H(+)(in) = ADP + phosphate + 5 H(+)(out). Functionally, catalytic subunit beta, of the mitochondrial membrane ATP synthase complex (F(1)F(0) ATP synthase or Complex V) that produces ATP from ADP in the presence of a proton gradient across the membrane which is generated by electron transport complexes of the respiratory chain. ATP synthase complex consist of a soluble F(1) head domain - the catalytic core - and a membrane F(1) domain - the membrane proton channel. These two domains are linked by a central stalk rotating inside the F(1) region and a stationary peripheral stalk. During catalysis, ATP synthesis in the catalytic domain of F(1) is coupled via a rotary mechanism of the central stalk subunits to proton translocation. In vivo, can only synthesize ATP although its ATP hydrolase activity can be activated artificially in vitro. With the subunit alpha (ATP5F1A), forms the catalytic core in the F(1) domain. This is ATP synthase F(1) complex catalytic subunit beta, mitochondrial from Mesocricetus auratus (Golden hamster).